A 433-amino-acid chain; its full sequence is Glutamate-1-semialdehyde 2,1-aminomutase (433 aa).

Lys-271 is modified (N6-(pyridoxal phosphate)lysine).

This sequence belongs to the class-III pyridoxal-phosphate-dependent aminotransferase family. HemL subfamily. In terms of assembly, homodimer. It depends on pyridoxal 5'-phosphate as a cofactor.

The protein localises to the cytoplasm. It catalyses the reaction (S)-4-amino-5-oxopentanoate = 5-aminolevulinate. It participates in porphyrin-containing compound metabolism; protoporphyrin-IX biosynthesis; 5-aminolevulinate from L-glutamyl-tRNA(Glu): step 2/2. The protein operates within porphyrin-containing compound metabolism; chlorophyll biosynthesis. This Prochlorococcus marinus (strain SARG / CCMP1375 / SS120) protein is Glutamate-1-semialdehyde 2,1-aminomutase.